We begin with the raw amino-acid sequence, 344 residues long: Heat-inducible transcription repressor HrcA (344 aa).

It belongs to the HrcA family.

Its function is as follows. Negative regulator of class I heat shock genes (grpE-dnaK-dnaJ and groELS operons). Prevents heat-shock induction of these operons. The protein is Heat-inducible transcription repressor HrcA of Streptococcus pneumoniae (strain P1031).